A 902-amino-acid polypeptide reads, in one-letter code: MEVNCLTLKDLISPRQTRLDFAVEDAETAQKENIFVDRSRMTPKTPMKNEPIDLSKQRIFTPERSPITPVKLVDRQPQVEPWTPTANLKMLISAASPDIRDREKKKELFRPIENKGDAFVNSLQLDVVGDSAVDDYEKRRPSRKQKSLGLLCQKFLARYPSYPLSTEKTTISLDEVAVSLGVERRRIYDIVNVLESLHLVSRVAKNQYGWHGRHSLPKTLRTLQRLGEEQKYEEQMACLQQKELDLMEYRFGERRKDGSPDPRDQHLLDFSESDYPSSSANSRKDKSLRIMSQKFVMLFLVSKTKIVTLDVAAKILIEESQDTPDHSKFKTKVRRLYDIANVLTSLALIKKVHVTEERGRKPAFKWIGPVDFSSIDEELLDVSASVLPELKKETYGQIRVCAKERLARYGSFNTVQTSEKIQRKVNSEPSSPQGGKQGPAYSLEIGSLAAIYRQKVEDSSQGEAFVNKRAAPPASVLDPTLPVDSEYCVKPLAQPVFSVAQTDLQAFSAQNGLNGQVGVPVPSAASDAETLKSALLASQPLVYVPSTSLFMLYGSVQEALSPESRSEEDGSGSDVPADLSLAPTAQKRLCEERNPLEDDEPAVKRQSREFEDSPLSLVMPKKPSNSTDLAFPVTTGNGRATPLEDACVKGQLPAAEDASGRAVPNGFIASECGNPSRNPDTEKSSNDNEITKDPSLLQYLYVQSPAGLNGFNMLLPGGQTPHAVAPSSAAMPSFGVPCMFLPSPGLGPFPVLYSPAIPGPISSAPGTLPNTGPMNFGLSTLASASHLLISPAAMVNPKSSTLPSADPQLRCQPPLNPNPVMPGSHGVIHPESPGYMRHPVSMVKAEQSPAPATPKSIQRRHRETFFKTPGSLGDPAFRRERNQSRNTSSAQRRLEISSSGPD.

At Ser-96 the chain carries Phosphoserine. Residues 143 to 212 mediate DNA binding; that stretch reads RKQKSLGLLC…VAKNQYGWHG (70 aa). Basic and acidic residues predominate over residues 253–269; sequence ERRKDGSPDPRDQHLLD. Positions 253–283 are disordered; the sequence is ERRKDGSPDPRDQHLLDFSESDYPSSSANSR. The DNA-binding element occupies 283–368; the sequence is RKDKSLRIMS…GRKPAFKWIG (86 aa). A Phosphoserine modification is found at Ser-411. 3 disordered regions span residues 418–439, 589–627, and 665–690; these read SEKI…KQGP, LCEE…SNST, and NGFI…DNEI. Basic and acidic residues-rich tracts occupy residues 589–611 and 679–690; these read LCEE…REFE and PDTEKSSNDNEI. Ser-832 carries the phosphoserine modification. The segment at 844 to 902 is disordered; that stretch reads KAEQSPAPATPKSIQRRHRETFFKTPGSLGDPAFRRERNQSRNTSSAQRRLEISSSGPD. The span at 884–902 shows a compositional bias: polar residues; that stretch reads SRNTSSAQRRLEISSSGPD.

It belongs to the E2F/DP family. Homodimer and heterodimer: mainly forms homodimers and, to a lesser extent, heterodimers with E2F8. Dimerization is important for DNA-binding. Interacts with HIF1A. Interacts with MN1.

Its subcellular location is the nucleus. Its function is as follows. Atypical E2F transcription factor that participates in various processes such as angiogenesis, polyploidization of specialized cells and DNA damage response. Mainly acts as a transcription repressor that binds DNA independently of DP proteins and specifically recognizes the E2 recognition site 5'-TTTC[CG]CGC-3'. Directly represses transcription of classical E2F transcription factors such as E2F1. Acts as a regulator of S-phase by recognizing and binding the E2-related site 5'-TTCCCGCC-3' and mediating repression of G1/S-regulated genes. Plays a key role in polyploidization of cells in placenta and liver by regulating the endocycle, probably by repressing genes promoting cytokinesis and antagonizing action of classical E2F proteins (E2F1, E2F2 and/or E2F3). Required for placental development by promoting polyploidization of trophoblast giant cells. Also involved in DNA damage response: up-regulated by p53/TP53 following genotoxic stress and acts as a downstream effector of p53/TP53-dependent repression by mediating repression of indirect p53/TP53 target genes involved in DNA replication. Acts as a promoter of sprouting angiogenesis, possibly by acting as a transcription activator: associates with HIF1A, recognizes and binds the VEGFA promoter, which is different from canonical E2 recognition site, and activates expression of the VEGFA gene. Acts as a negative regulator of keratinocyte differentiation. The chain is Transcription factor E2F7 (E2f7) from Rattus norvegicus (Rat).